A 557-amino-acid polypeptide reads, in one-letter code: Formate--tetrahydrofolate ligase (557 aa).

Position 66–73 (66–73 (TPAGEGKS)) interacts with ATP.

This sequence belongs to the formate--tetrahydrofolate ligase family.

It catalyses the reaction (6S)-5,6,7,8-tetrahydrofolate + formate + ATP = (6R)-10-formyltetrahydrofolate + ADP + phosphate. Its pathway is one-carbon metabolism; tetrahydrofolate interconversion. The chain is Formate--tetrahydrofolate ligase from Clostridium botulinum (strain Okra / Type B1).